We begin with the raw amino-acid sequence, 366 residues long: 3-dehydroquinate synthase (366 aa).

NAD(+) is bound by residues 75–80 (DGEQYK), 109–113 (GVIGD), 133–134 (TT), K146, K155, and 173–176 (CLST). The Zn(2+) site is built by E188, H251, and H268.

It belongs to the sugar phosphate cyclases superfamily. Dehydroquinate synthase family. The cofactor is Co(2+). Zn(2+) serves as cofactor. Requires NAD(+) as cofactor.

It localises to the cytoplasm. It catalyses the reaction 7-phospho-2-dehydro-3-deoxy-D-arabino-heptonate = 3-dehydroquinate + phosphate. The protein operates within metabolic intermediate biosynthesis; chorismate biosynthesis; chorismate from D-erythrose 4-phosphate and phosphoenolpyruvate: step 2/7. Functionally, catalyzes the conversion of 3-deoxy-D-arabino-heptulosonate 7-phosphate (DAHP) to dehydroquinate (DHQ). In Vibrio campbellii (strain ATCC BAA-1116), this protein is 3-dehydroquinate synthase.